A 360-amino-acid polypeptide reads, in one-letter code: Phospho-N-acetylmuramoyl-pentapeptide-transferase (360 aa).

10 consecutive transmembrane segments (helical) span residues 24–44, 69–89, 92–112, 133–153, 158–178, 199–219, 239–259, 263–283, 288–308, and 337–357; these read RAVMAALTALAFSLMFGPWTI, GTPTMGGSLILTAITVSTLLW, WANPYIWILLGVLLATGALGF, MVWQSSVAIIAGLALFYLAAN, ILIVPFFKQIALPLGVVGFLV, GLATFPVVLVAAGLAIFAYVS, VAIFCTAMCGACLGFLWFNAY, VFMGDVGALALGAALGTVAVI, FVLVIMGGLFVVEAVSVMLQV, and QVVVRFWIITIVLVLIGLSTL.

This sequence belongs to the glycosyltransferase 4 family. MraY subfamily. Mg(2+) is required as a cofactor.

Its subcellular location is the cell inner membrane. The catalysed reaction is UDP-N-acetyl-alpha-D-muramoyl-L-alanyl-gamma-D-glutamyl-meso-2,6-diaminopimeloyl-D-alanyl-D-alanine + di-trans,octa-cis-undecaprenyl phosphate = di-trans,octa-cis-undecaprenyl diphospho-N-acetyl-alpha-D-muramoyl-L-alanyl-D-glutamyl-meso-2,6-diaminopimeloyl-D-alanyl-D-alanine + UMP. Its pathway is cell wall biogenesis; peptidoglycan biosynthesis. Its function is as follows. Catalyzes the initial step of the lipid cycle reactions in the biosynthesis of the cell wall peptidoglycan: transfers peptidoglycan precursor phospho-MurNAc-pentapeptide from UDP-MurNAc-pentapeptide onto the lipid carrier undecaprenyl phosphate, yielding undecaprenyl-pyrophosphoryl-MurNAc-pentapeptide, known as lipid I. This is Phospho-N-acetylmuramoyl-pentapeptide-transferase from Neisseria meningitidis serogroup C (strain 053442).